A 177-amino-acid chain; its full sequence is 3-hydroxydecanoyl-[acyl-carrier-protein] dehydratase (177 aa).

The active site involves His-76.

Belongs to the thioester dehydratase family. FabA subfamily. In terms of assembly, homodimer.

It localises to the cytoplasm. It catalyses the reaction a (3R)-hydroxyacyl-[ACP] = a (2E)-enoyl-[ACP] + H2O. The catalysed reaction is (3R)-hydroxydecanoyl-[ACP] = (2E)-decenoyl-[ACP] + H2O. It carries out the reaction (2E)-decenoyl-[ACP] = (3Z)-decenoyl-[ACP]. It participates in lipid metabolism; fatty acid biosynthesis. In terms of biological role, necessary for the introduction of cis unsaturation into fatty acids. Catalyzes the dehydration of (3R)-3-hydroxydecanoyl-ACP to E-(2)-decenoyl-ACP and then its isomerization to Z-(3)-decenoyl-ACP. Can catalyze the dehydratase reaction for beta-hydroxyacyl-ACPs with saturated chain lengths up to 16:0, being most active on intermediate chain length. The polypeptide is 3-hydroxydecanoyl-[acyl-carrier-protein] dehydratase (Mannheimia succiniciproducens (strain KCTC 0769BP / MBEL55E)).